Consider the following 527-residue polypeptide: Cytochrome P450 714B3 (527 aa).

Topologically, residues 1 to 14 (MEVAMAMAVKVLLS) are lumenal. A helical; Signal-anchor for type III membrane protein transmembrane segment spans residues 15–35 (LCCVGACGLAVYLYHILWLVP). Residues 36-527 (QKVLAKFEDQ…SVCTKRGTAI (492 aa)) lie on the Cytoplasmic side of the membrane. Cysteine 464 is a heme binding site.

This sequence belongs to the cytochrome P450 family. Heme serves as cofactor.

It is found in the membrane. Its function is as follows. May be involved in gibberellin metabolism. The chain is Cytochrome P450 714B3 (CYP714B3) from Zea mays (Maize).